Here is a 180-residue protein sequence, read N- to C-terminus: 3-deoxy-D-manno-octulosonate 8-phosphate phosphatase KdsC (180 aa).

Residues D14 and D16 each coordinate Mg(2+). Residues D16, 37-41 (HVRDG), K45, R60, R68, and K84 contribute to the substrate site. Position 107 (D107) interacts with Mg(2+).

Belongs to the KdsC family. As to quaternary structure, homotetramer. It depends on Mg(2+) as a cofactor.

It catalyses the reaction 3-deoxy-alpha-D-manno-2-octulosonate-8-phosphate + H2O = 3-deoxy-alpha-D-manno-oct-2-ulosonate + phosphate. Its function is as follows. Catalyzes the hydrolysis of 3-deoxy-D-manno-octulosonate 8-phosphate (KDO 8-P) to 3-deoxy-D-manno-octulosonate (KDO) and inorganic phosphate. The chain is 3-deoxy-D-manno-octulosonate 8-phosphate phosphatase KdsC from Haemophilus influenzae (strain ATCC 51907 / DSM 11121 / KW20 / Rd).